The primary structure comprises 53 residues: ATP synthase protein 8 (53 aa).

A helical transmembrane segment spans residues 4–24 (MAPISWLLLFIIFSITFILFC).

The protein belongs to the ATPase protein 8 family. As to quaternary structure, F-type ATPases have 2 components, CF(1) - the catalytic core - and CF(0) - the membrane proton channel.

It localises to the mitochondrion membrane. Its function is as follows. Mitochondrial membrane ATP synthase (F(1)F(0) ATP synthase or Complex V) produces ATP from ADP in the presence of a proton gradient across the membrane which is generated by electron transport complexes of the respiratory chain. F-type ATPases consist of two structural domains, F(1) - containing the extramembraneous catalytic core and F(0) - containing the membrane proton channel, linked together by a central stalk and a peripheral stalk. During catalysis, ATP synthesis in the catalytic domain of F(1) is coupled via a rotary mechanism of the central stalk subunits to proton translocation. Part of the complex F(0) domain. Minor subunit located with subunit a in the membrane. The chain is ATP synthase protein 8 (mt:ATPase8) from Drosophila sechellia (Fruit fly).